A 431-amino-acid chain; its full sequence is Indole diterpene prenyltransferase nodD1 (431 aa).

L-tryptophan is bound at residue 85–86; the sequence is FI. Residues arginine 107, lysine 194, arginine 268, lysine 270, tyrosine 272, and tyrosine 353 each coordinate substrate.

The protein belongs to the tryptophan dimethylallyltransferase family.

Its pathway is secondary metabolite biosynthesis. Its function is as follows. Indole diterpene prenyltransferase; part of the gene cluster that mediates the biosynthesis of the indole diterpenes nodulisporic acids (NA). Nodulisporic acid A (NAA) and its chemically modified derivatives are of particular significance because of their highly potent insecticidal activity against blood-feeding arthropods and lack of observable adverse effects on mammals, in particular the tremogenicity associated with the paspaline-derived IDTs is not observed. The geranylgeranyl diphosphate (GGPP) synthase ggs1, localized outside of the cluster, is proposed to catalyze the first step in nodulisporic acid biosynthesis via conversion of farnesyl pyrophosphate and isopentyl pyrophosphate into geranylgeranyl pyrophosphate (GGPP). Condensation of indole-3-glycerol phosphate with GGPP by the prenyl transferase nodC then forms 3-geranylgeranylindole (3-GGI). Epoxidation by the FAD-dependent monooxygenase nodM leads to a single-epoxidized-GGI that is substrate of the terpene cyclase nodB for cyclization to yield emindole SB. The terminal methyl carbon, C28, of emindole SB is then oxidized by the cytochrome P450 monooxygenase nodW to produce nodulisporic acid F (NAF), the pentacyclic core of NAA. NAF is converted to nodulisporic acid E (NAE) via prenylation. This step is probably performed by one of the indole diterpene prenyltransferases nodD1 or nodD2. Several oxidation steps performed by the FAD-linked oxidoreductase nodO and one of the cytochrome P450 monooxygenase nodR, nodX or nodZ further convert NAE to nodulisporic acid D (NAD). NAD is substrate of cytochrome P450 monooxygenase nodJ to produce the precursor of nodulisporic acid C (NAC), converted to NAC by one of the indole diterpene prenyltransferases nodD1 or nodD2. The FAD-dependent monooxygenase nodY2 then oxidizes NAC to nodulisporic acid B (NAB). Finally NAB is converted to NAA by one of the cytochrome P450 monooxygenases nodR, nodX or nodZ. This chain is Indole diterpene prenyltransferase nodD1, found in Hypoxylon pulicicidum.